The chain runs to 350 residues: Small-conductance mechanosensitive channel MscMJ (350 aa).

5 helical membrane passes run 10–30 (ISNILIFVVITLLGIFIGKIV), 59–79 (LPIIVLVVTLFFYFGLRFLIL), 91–111 (VKVVVILSATYFAVKFIDGIF), 130–150 (IIKPLKKVVKILTILLGILTA), and 154–174 (VGYDITALLAGLGVGGLALAL).

This sequence belongs to the MscS (TC 1.A.23) family.

Its subcellular location is the cell membrane. In terms of biological role, small-conductance mechanosensitive channel that opens in response to stretch forces in the membrane lipid bilayer. Exhibits a sixfold preference for cations over anions. Non-rectifying. In Methanocaldococcus jannaschii (strain ATCC 43067 / DSM 2661 / JAL-1 / JCM 10045 / NBRC 100440) (Methanococcus jannaschii), this protein is Small-conductance mechanosensitive channel MscMJ.